A 147-amino-acid polypeptide reads, in one-letter code: Molybdopterin synthase catalytic subunit 1 (147 aa).

Residues 43–45 (NVR), 109–110 (HR), lysine 125, and 132–134 (KKE) each bind substrate.

The protein belongs to the MoaE family. As to quaternary structure, heterotetramer of 2 MoaD subunits and 2 MoaE subunits. Also stable as homodimer. The enzyme changes between these two forms during catalysis.

It carries out the reaction 2 [molybdopterin-synthase sulfur-carrier protein]-C-terminal-Gly-aminoethanethioate + cyclic pyranopterin phosphate + H2O = molybdopterin + 2 [molybdopterin-synthase sulfur-carrier protein]-C-terminal Gly-Gly + 2 H(+). It functions in the pathway cofactor biosynthesis; molybdopterin biosynthesis. In terms of biological role, converts molybdopterin precursor Z into molybdopterin. This requires the incorporation of two sulfur atoms into precursor Z to generate a dithiolene group. The sulfur is provided by MoaD. The chain is Molybdopterin synthase catalytic subunit 1 (moaE1) from Mycobacterium tuberculosis (strain ATCC 25618 / H37Rv).